A 630-amino-acid chain; its full sequence is Phosphomethylpyrimidine synthase (630 aa).

Substrate is bound by residues Asn227, Met256, Tyr285, His321, 341-343 (SRG), 382-385 (DGLR), and Glu421. His425 provides a ligand contact to Zn(2+). Tyr448 provides a ligand contact to substrate. His489 is a Zn(2+) binding site. [4Fe-4S] cluster-binding residues include Cys569, Cys572, and Cys577.

The protein belongs to the ThiC family. Homodimer. Requires [4Fe-4S] cluster as cofactor.

It catalyses the reaction 5-amino-1-(5-phospho-beta-D-ribosyl)imidazole + S-adenosyl-L-methionine = 4-amino-2-methyl-5-(phosphooxymethyl)pyrimidine + CO + 5'-deoxyadenosine + formate + L-methionine + 3 H(+). It functions in the pathway cofactor biosynthesis; thiamine diphosphate biosynthesis. In terms of biological role, catalyzes the synthesis of the hydroxymethylpyrimidine phosphate (HMP-P) moiety of thiamine from aminoimidazole ribotide (AIR) in a radical S-adenosyl-L-methionine (SAM)-dependent reaction. The protein is Phosphomethylpyrimidine synthase of Hydrogenovibrio crunogenus (strain DSM 25203 / XCL-2) (Thiomicrospira crunogena).